We begin with the raw amino-acid sequence, 213 residues long: uncharacterized protein (213 aa).

Residues 2-91 form the CS domain; the sequence is SRHPEVKWAQ…AEAKWWKKLV (90 aa). The tract at residues 168 to 213 is disordered; that stretch reads GMGGMGGMDEFEDESDDEEEVSKPQDAEKAAEAGKSQESDAKAETS. Residues 176-187 show a composition bias toward acidic residues; sequence DEFEDESDDEEE. A compositionally biased stretch (basic and acidic residues) spans 188–213; sequence VSKPQDAEKAAEAGKSQESDAKAETS.

This sequence belongs to the p23/wos2 family.

This is an uncharacterized protein from Oryza sativa subsp. japonica (Rice).